The sequence spans 369 residues: MTERQKTYFDLSIGGKPAGRVVFEVYSDVTPKTAENFVRLCAGDAGECRTKPGVPLCYQGSLFHRVIKGFMCQFGDFTNGDGTGGESIYGEKFEDENFARKHDRPFLLSMANAGPNTNGSQCFITCAPTPHLDGKHVVFGEVIQGKRVVRAIERQETAADRPLADVRIDACGILPASYEVPADAEATPADEYGDDYEETLADDAKVDLADPRSVIRAVEAVKAIGTAQLQAARFDVAVQKYAKAAGFLQEYFPDDLPDADVAALEQLKVAVHLNLALAALKAGNHQRVLSAASEVLHGAADDKAKAKALYRRGLAYHHLKDPEMALTDLELAATYQPGDAGIAQAIVNARALKQKLREQQKKALSKMFS.

One can recognise a PPIase cyclophilin-type domain in the interval 8 to 173 (YFDLSIGGKP…ADVRIDACGI (166 aa)). TPR repeat units follow at residues 218-251 (VEAV…LQEY), 269-302 (VAVH…AADD), and 306-339 (AKAL…QPGD).

This sequence belongs to the cyclophilin-type PPIase family. PPIase D subfamily.

The protein localises to the cytoplasm. It catalyses the reaction [protein]-peptidylproline (omega=180) = [protein]-peptidylproline (omega=0). Its function is as follows. PPIases accelerate the folding of proteins. It catalyzes the cis-trans isomerization of proline imidic peptide bonds in oligopeptides. The chain is Peptidyl-prolyl cis-trans isomerase D (CPR6) from Eremothecium gossypii (strain ATCC 10895 / CBS 109.51 / FGSC 9923 / NRRL Y-1056) (Yeast).